The sequence spans 277 residues: Transcription antiterminator LicT (277 aa).

PRD domains follow at residues 65–170 and 171–277; these read DIPI…EEMP and NIIN…VKQA.

This sequence belongs to the transcriptional antiterminator BglG family. In terms of processing, phosphorylated.

Functionally, mediates positive regulation of the glucanase operon (licST) by functioning as an antiterminator factor of transcription. Prevents termination at terminator lic-t. This Bacillus subtilis (strain 168) protein is Transcription antiterminator LicT (licT).